Here is a 183-residue protein sequence, read N- to C-terminus: Large ribosomal subunit protein uL5 (183 aa).

The protein belongs to the universal ribosomal protein uL5 family. Part of the 50S ribosomal subunit; part of the 5S rRNA/L5/L18/L25 subcomplex. Contacts the 5S rRNA and the P site tRNA. Forms a bridge to the 30S subunit in the 70S ribosome.

This is one of the proteins that bind and probably mediate the attachment of the 5S RNA into the large ribosomal subunit, where it forms part of the central protuberance. In the 70S ribosome it contacts protein S13 of the 30S subunit (bridge B1b), connecting the 2 subunits; this bridge is implicated in subunit movement. Contacts the P site tRNA; the 5S rRNA and some of its associated proteins might help stabilize positioning of ribosome-bound tRNAs. This Corynebacterium aurimucosum (strain ATCC 700975 / DSM 44827 / CIP 107346 / CN-1) (Corynebacterium nigricans) protein is Large ribosomal subunit protein uL5.